The following is a 765-amino-acid chain: Protein O-mannosyl-transferase 2 (765 aa).

Residues 1–31 are disordered; that stretch reads MAASVVKTPKCPRRGSVKDVAQNAPRTAPTS. A helical transmembrane segment spans residues 35–55; it reads ANWNWWLLLATVFLVTFATRF. N-linked (GlcNAc...) asparagine glycosylation is found at Asn-80, Asn-106, and Asn-119. 5 helical membrane-spanning segments follow: residues 128-148, 175-195, 206-226, 228-248, and 268-288; these read YFCTTLGALIMPMGFDTVYDL, ILLDPILLFFMMASVWGMVKV, GLRWWLWLFLTGTMLSCTISV, FVGLFVVLLVGLHTATELWLI, and ITLIVWPVLLYILFFYIHLSV. 2 N-linked (GlcNAc...) asparagine glycosylation sites follow: Asn-290 and Asn-314. MIR domains follow at residues 318 to 374, 384 to 440, and 445 to 501; these read PRDV…IRPH, VQIL…VLIV, and NETV…VEDN. N-linked (GlcNAc...) asparagine glycosylation is present at Asn-445. 4 helical membrane passes run 566-586, 667-687, 689-709, and 719-739; these read IYLLGNPLIWWSNLVFLALFV, LFLGWMLHYLPFWAMGRVLYF, HYFPALIFNSLLTGVMYNYIL, and VILGLVLSILVYSFAAFSPLA. The N-linked (GlcNAc...) asparagine glycan is linked to Asn-751.

It belongs to the glycosyltransferase 39 family. Interacts with Rt/POMT1. In terms of tissue distribution, at the cellular blastoderm stage, expression accumulates in the ventrally located mesoderm primordium. At germ band extension, mesoderm expression is seen as stripes of strong expression. A very strong signal is also detected in the invaginating gut. As the germ band retracts, mesodermal expression decays and becomes restricted to somatic muscle precursors.

It localises to the endoplasmic reticulum membrane. It catalyses the reaction a di-trans,poly-cis-dolichyl beta-D-mannosyl phosphate + L-seryl-[protein] = 3-O-(alpha-D-mannosyl)-L-seryl-[protein] + a di-trans,poly-cis-dolichyl phosphate + H(+). The enzyme catalyses a di-trans,poly-cis-dolichyl beta-D-mannosyl phosphate + L-threonyl-[protein] = 3-O-(alpha-D-mannosyl)-L-threonyl-[protein] + a di-trans,poly-cis-dolichyl phosphate + H(+). The protein operates within protein modification; protein glycosylation. Rt/POMT1 and tw/POMT2 function as a protein O-mannosyltransferase in association with each other to generate and maintain normal muscle development. This is Protein O-mannosyl-transferase 2 (tw) from Drosophila melanogaster (Fruit fly).